A 377-amino-acid chain; its full sequence is P2Y purinoceptor 2 (377 aa).

At 1–32 (MAADLGPWNDTINGTWDGDELGYRCRFNEDFK) the chain is on the extracellular side. Residues Asn9 and Asn13 are each glycosylated (N-linked (GlcNAc...) asparagine). Residues 33–59 (YVLLPVSYGVVCVPGLCLNAVALYIFL) form a helical membrane-spanning segment. Residues 60–70 (CRLKTWNASTT) lie on the Cytoplasmic side of the membrane. A helical transmembrane segment spans residues 71 to 93 (YMFHLAVSDALYAASLPLLVYYY). Residues 94 to 110 (ARGDHWPFSTVLCKLVR) are Extracellular-facing. Cys106 and Cys183 are disulfide-bonded. The helical transmembrane segment at 111–129 (FLFYTNLYCSILFLTCISV) threads the bilayer. Residues 130-152 (HRCLGVLRPLRSLRWGRARYARR) lie on the Cytoplasmic side of the membrane. A helical membrane pass occupies residues 153 to 172 (VAGAVWVLVLACQAPVLYFV). At 173-194 (TTSARGGRVTCHDTSAPELFSR) the chain is on the extracellular side. The helical transmembrane segment at 195 to 220 (FVAYSSVMLGLLFAVPFAVILVCYVL) threads the bilayer. The Cytoplasmic portion of the chain corresponds to 221–246 (MARRLLKPAYGTSGGLPRAKRKSVRT). Residues 247-269 (IAVVLAVFALCFLPFHVTRTLYY) form a helical membrane-spanning segment. Topologically, residues 270 to 287 (SFRSLDLSCHTLNAINMA) are extracellular. A helical membrane pass occupies residues 288 to 309 (YKVTRPLASANSCLDPVLYFLA). Residues 310-377 (GQRLVRFARD…GSENTKDIRL (68 aa)) are Cytoplasmic-facing. The disordered stretch occupies residues 318–377 (RDAKPPTGPSPATPARRRLGLRRSDRTDMQRIEDVLGSSEDSRRTESTPAGSENTKDIRL). Residues 339–363 (RRSDRTDMQRIEDVLGSSEDSRRTE) show a composition bias toward basic and acidic residues.

It belongs to the G-protein coupled receptor 1 family. As to expression, spleen, testis, kidney, liver, lung, heart and brain.

The protein localises to the cell membrane. Functionally, receptor for ATP and UTP coupled to G-proteins that activate a phosphatidylinositol-calcium second messenger system. The affinity range is UTP = ATP &gt; ATP-gamma-S &gt;&gt; 2-methylthio-ATP = ADP. The polypeptide is P2Y purinoceptor 2 (P2RY2) (Homo sapiens (Human)).